A 205-amino-acid polypeptide reads, in one-letter code: Dihydrofolate reductase (205 aa).

The DHFR domain occupies 1 to 201; the sequence is MLALVVALAS…TSFKMFLYTK (201 aa). Residues Ala7 and 13-19 contribute to the NADP(+) site; that span reads GIGNANA. 29–34 serves as a coordination point for substrate; that stretch reads DMAWFR. Residue 62-64 participates in NADP(+) binding; that stretch reads RRT. Arg78 is a binding site for substrate. NADP(+)-binding positions include 84–86 and 118–125; these read SRG and GGRDVYSL.

This sequence belongs to the dihydrofolate reductase family.

The enzyme catalyses (6S)-5,6,7,8-tetrahydrofolate + NADP(+) = 7,8-dihydrofolate + NADPH + H(+). Its pathway is cofactor biosynthesis; tetrahydrofolate biosynthesis; 5,6,7,8-tetrahydrofolate from 7,8-dihydrofolate: step 1/1. Key enzyme in folate metabolism. Catalyzes an essential reaction for de novo glycine and purine synthesis, and for DNA precursor synthesis. This chain is Dihydrofolate reductase (DHFR-1), found in Encephalitozoon cuniculi (strain GB-M1) (Microsporidian parasite).